A 215-amino-acid chain; its full sequence is CASP-like protein 1E1 (215 aa).

At 1–51 (MESSRGKPGLNGSGGGAAAFDYSSRRGYYTGAGAALPPLAAGSRAPPVDPC) the chain is on the cytoplasmic side. A helical membrane pass occupies residues 52 to 72 (CVALRVFVLLGTLASAVVMAA). The Extracellular portion of the chain corresponds to 73–103 (DRQSTTVQIAAGEQLAPPLRVPVTAKWTYSS). A helical membrane pass occupies residues 104 to 124 (AFVYFVVANAMVFAFSAAALA). Over 125–130 (AVRRRS) the chain is Cytoplasmic. A helical membrane pass occupies residues 131 to 151 (AVVPVMVGDLVAMALLFSAVG). Residues 152-185 (AAAQFGLLGERGNAHVRWAKVCDVYGPFCERAMA) lie on the Extracellular side of the membrane. The chain crosses the membrane as a helical span at residues 186–206 (AVVVALIAAFADLVLLMLTIL). At 207 to 215 (TIHKASSYY) the chain is on the cytoplasmic side.

This sequence belongs to the Casparian strip membrane proteins (CASP) family. As to quaternary structure, homodimer and heterodimers.

It localises to the cell membrane. The sequence is that of CASP-like protein 1E1 from Oryza sativa subsp. indica (Rice).